The chain runs to 561 residues: SUN domain-containing protein 5 (561 aa).

A helical membrane pass occupies residues 36–56 (GSFFERSISLVLLLWCFLFLV). The SUN domain occupies 158-318 (NGSSQLVNNG…SVVEVFGIDA (161 aa)). A disordered region spans residues 345–367 (ADEKQDGEIKSNRTDQIGKETEA). Residues 454 to 499 (MEKELRDLELWKTLVASRVESLARGNSALRLDVEKIVKEQANLESK) are a coiled coil. The next 2 helical transmembrane spans lie at 501–521 (LGVL…LVST) and 540–560 (PDSG…IHLL).

Forms homomers. Interacts with SUN3 and TIK.

Its subcellular location is the membrane. Its function is as follows. Encodes a member of the mid-SUN subfamily of SUN-domain proteins. It is involved in early seed development and nuclear morphology. [TAIR]. The chain is SUN domain-containing protein 5 from Arabidopsis thaliana (Mouse-ear cress).